Reading from the N-terminus, the 874-residue chain is Leucine--tRNA ligase (874 aa).

A 'HIGH' region motif is present at residues 47–57 (PYPSGKLHMGH). The short motif at 636–640 (KMSKS) is the 'KMSKS' region element. K639 serves as a coordination point for ATP.

Belongs to the class-I aminoacyl-tRNA synthetase family.

The protein resides in the cytoplasm. It catalyses the reaction tRNA(Leu) + L-leucine + ATP = L-leucyl-tRNA(Leu) + AMP + diphosphate. The sequence is that of Leucine--tRNA ligase from Acinetobacter baumannii (strain AB307-0294).